The following is a 380-amino-acid chain: Outer membrane protein 40 (380 aa).

An N-terminal signal peptide occupies residues 1–21; it reads MKAKSLLLALAGLACTFSATA. At glutamine 22 the chain carries Pyrrolidone carboxylic acid. The region spanning 270–380 is the OmpA-like domain; sequence PTVTRVVVDN…NRIVVMTAAE (111 aa).

It belongs to the outer membrane OOP (TC 1.B.6) superfamily. Disulfide-linked heterodimer with Omp41.

It localises to the cell outer membrane. Its function is as follows. May have porin activity and function in peptidoglycan binding. This chain is Outer membrane protein 40, found in Porphyromonas gingivalis (strain ATCC BAA-308 / W83).